The primary structure comprises 184 residues: Shikimate kinase (184 aa).

17–22 lines the ATP pocket; it reads SVGKTS. Thr21 is a binding site for Mg(2+). Positions 39 and 85 each coordinate substrate.

This sequence belongs to the shikimate kinase family. In terms of assembly, monomer. Requires Mg(2+) as cofactor.

Its subcellular location is the cytoplasm. It carries out the reaction shikimate + ATP = 3-phosphoshikimate + ADP + H(+). It functions in the pathway metabolic intermediate biosynthesis; chorismate biosynthesis; chorismate from D-erythrose 4-phosphate and phosphoenolpyruvate: step 5/7. Functionally, catalyzes the specific phosphorylation of the 3-hydroxyl group of shikimic acid using ATP as a cosubstrate. In Chlamydia muridarum (strain MoPn / Nigg), this protein is Shikimate kinase.